A 75-amino-acid chain; its full sequence is MKQDIHPKYTEVTVNCANCGNTFVTRSTRDSIKVDICSNCHPFYTGKQTLVDTAGRVDRFNKRFAKSAASQAQAK.

This sequence belongs to the bacterial ribosomal protein bL31 family. Type A subfamily. Part of the 50S ribosomal subunit.

Functionally, binds the 23S rRNA. The polypeptide is Large ribosomal subunit protein bL31 (Chlorobium phaeovibrioides (strain DSM 265 / 1930) (Prosthecochloris vibrioformis (strain DSM 265))).